A 319-amino-acid chain; its full sequence is MDLLFLGTSAGVPTKARNVSATAVIEASGSHWYLVDCGEGTQHRLLHTPLSIRDLRAIFITHVHGDHCFGLPGLLASAGMSGRTQPLEVILPAVLHDWVRQGLVASDTFLPFELRLLPVEALIAWRSETLQVTTVQLSHRVPSVGFVFTEINPEPRLDIQRLDAEGIPRGPLWGELAKGLTVTFNGQLLNGNDYLRPSRPPQRVIVCGDNDKPALLAAVARGADVLVHEATFTQAVVERTGGTFGHSTAAEVARFAEAAGVRNLVLTHFSARYQNDPRRSPHIDTVRDEALAHYSGQLTLAQDLQRYHLGRNGLLEASA.

Positions 62, 64, 66, 67, 139, 209, and 268 each coordinate Zn(2+). Asp66 (proton acceptor) is an active-site residue.

This sequence belongs to the RNase Z family. In terms of assembly, homodimer. Zn(2+) is required as a cofactor.

It catalyses the reaction Endonucleolytic cleavage of RNA, removing extra 3' nucleotides from tRNA precursor, generating 3' termini of tRNAs. A 3'-hydroxy group is left at the tRNA terminus and a 5'-phosphoryl group is left at the trailer molecule.. In terms of biological role, zinc phosphodiesterase, which displays some tRNA 3'-processing endonuclease activity. Probably involved in tRNA maturation, by removing a 3'-trailer from precursor tRNA. The chain is Ribonuclease Z from Pseudomonas putida (strain ATCC 700007 / DSM 6899 / JCM 31910 / BCRC 17059 / LMG 24140 / F1).